The sequence spans 607 residues: WD repeat-containing protein 1-B (607 aa).

13 WD repeats span residues Glu-4–Ile-45, Pro-48–Thr-87, Leu-93–Thr-135, Ser-138–Gly-176, Lys-180–Gly-218, Val-224–Val-263, Thr-270–Lys-306, Lys-311–Ala-351, Thr-358–Val-408, Leu-432–Ile-474, Lys-480–Val-518, Ser-523–Leu-561, and Thr-566–Val-604.

The protein belongs to the WD repeat AIP1 family.

Its subcellular location is the cell membrane. The protein resides in the cytoplasm. The protein localises to the cytoskeleton. It is found in the nucleus. Induces disassembly of actin filaments in conjunction with ADF/cofilin family proteins. Doesn't sever actin filaments alone, but caps the barbed ends of filaments severed by cofilin, which blocks annealing and depolymerization and allows more extensive severing by cofilin. This is WD repeat-containing protein 1-B (wdr1-b) from Xenopus laevis (African clawed frog).